The chain runs to 503 residues: Arabinose import ATP-binding protein AraG 1 (503 aa).

2 consecutive ABC transporter domains span residues 5 to 240 (LRFD…MVGR) and 251 to 497 (RTLG…LPQT). Position 37–44 (37–44 (GENGAGKS)) interacts with ATP.

Belongs to the ABC transporter superfamily. Arabinose importer (TC 3.A.1.2.2) family. In terms of assembly, the complex is composed of two ATP-binding proteins (AraG), two transmembrane proteins (AraH) and a solute-binding protein (AraF).

The protein resides in the cell inner membrane. The catalysed reaction is L-arabinose(out) + ATP + H2O = L-arabinose(in) + ADP + phosphate + H(+). In terms of biological role, part of the ABC transporter complex AraFGH involved in arabinose import. Responsible for energy coupling to the transport system. The chain is Arabinose import ATP-binding protein AraG 1 from Burkholderia cenocepacia (strain HI2424).